Consider the following 476-residue polypeptide: MPMKIENGPFWKRVEENLQNDFMRGAVAGMQDRGYVRRLGVIEELGHWEEWRSLAEQIRKHTLENLDYYLMQLSENVAKRGGHVFFAQTAEEANDYIRRIALEKQAKKIVKSKSMVTEEINLNPVLEAIGCDVVETDLGEYILQIDDHDPPSHIVGPALHKNKEQIRDVFHRKLGYNKSSDPVELARHARETLRRDYLTADIGITGCNFAIAESGSITLVTNEGNADLVTSLPKTQITVMGMERIVPTFKEMEVLVSMLTRSAVGQKLTSYITVLTGPREQGDADGPEEFHLVIVDNGRSSILGTEFQPVLQCIRCAACVNVCPVYRHIGGHSYGSIYSGPIGAVLSPLLGGYDDYKELPYASSLCAACTEVCPVKIPLHELLIKHRQIIVEREGKAPVAEKLAMKAFRLGTASPSLYRFGTKLAPSAFAPFAEDGRITKGPGPLKAWTESRVFPAPNNERFRDWFRNRQKGGNPS.

4Fe-4S ferredoxin-type domains are found at residues 304 to 334 (GTEF…GHSY) and 353 to 382 (YDDY…LHEL). [4Fe-4S] cluster contacts are provided by Cys313, Cys316, Cys319, Cys323, Cys366, Cys369, and Cys373.

It belongs to the LutB/YkgF family.

Its function is as follows. Is involved in L-lactate degradation and allows cells to grow with lactate as the sole carbon source. Has probably a role as an electron transporter during oxidation of L-lactate. The polypeptide is Lactate utilization protein B (Geobacillus thermodenitrificans (strain NG80-2)).